The primary structure comprises 476 residues: Membrane-bound lytic murein transglycosylase F (476 aa).

Residues 1–16 form the signal peptide; that stretch reads MIKTLFIILLCGILSA. The non-LT domain stretch occupies residues 17–259; that stretch reads CQPVDIQDVD…HLNEKYFGHV (243 aa). The interval 260–476 is LT domain; the sequence is KRFDYVDTRA…VPAKSHVSAQ (217 aa). Glu-304 is a catalytic residue.

This sequence in the N-terminal section; belongs to the bacterial solute-binding protein 3 family. It in the C-terminal section; belongs to the transglycosylase Slt family.

It localises to the cell outer membrane. It carries out the reaction Exolytic cleavage of the (1-&gt;4)-beta-glycosidic linkage between N-acetylmuramic acid (MurNAc) and N-acetylglucosamine (GlcNAc) residues in peptidoglycan, from either the reducing or the non-reducing ends of the peptidoglycan chains, with concomitant formation of a 1,6-anhydrobond in the MurNAc residue.. Functionally, murein-degrading enzyme that degrades murein glycan strands and insoluble, high-molecular weight murein sacculi, with the concomitant formation of a 1,6-anhydromuramoyl product. Lytic transglycosylases (LTs) play an integral role in the metabolism of the peptidoglycan (PG) sacculus. Their lytic action creates space within the PG sacculus to allow for its expansion as well as for the insertion of various structures such as secretion systems and flagella. This is Membrane-bound lytic murein transglycosylase F from Shewanella frigidimarina (strain NCIMB 400).